A 30-amino-acid polypeptide reads, in one-letter code: Cyclotide hyen-L (30 aa).

The segment at residues 1-30 (GIPCAESCVYIPCTVTALLGCSCSDKVCYN) is a cross-link (cyclopeptide (Gly-Asn)). Disulfide bonds link cysteine 4/cysteine 21, cysteine 8/cysteine 23, and cysteine 13/cysteine 28.

Post-translationally, this is a cyclic peptide. Detected in stems (at protein level).

In terms of biological role, probably participates in a plant defense mechanism. Has cytotoxic activity against HUVEC cells (LC(50)= 2.26 uM) and various cancer cells including HeLa (LC(50)= 3.48 uM), MCF-7 and K562. Displays very weak hemolytic activity. Binds to and induces leakage in phospholipd membranes, particularly ones containing 1-palmitoyl-2-oleophosphatidylethanolamine (POPE). This is Cyclotide hyen-L from Pigea enneasperma (Spade flower).